The primary structure comprises 315 residues: Methionyl-tRNA formyltransferase (315 aa).

Residue 113–116 coordinates (6S)-5,6,7,8-tetrahydrofolate; the sequence is SLLP.

The protein belongs to the Fmt family.

It carries out the reaction L-methionyl-tRNA(fMet) + (6R)-10-formyltetrahydrofolate = N-formyl-L-methionyl-tRNA(fMet) + (6S)-5,6,7,8-tetrahydrofolate + H(+). Its function is as follows. Attaches a formyl group to the free amino group of methionyl-tRNA(fMet). The formyl group appears to play a dual role in the initiator identity of N-formylmethionyl-tRNA by promoting its recognition by IF2 and preventing the misappropriation of this tRNA by the elongation apparatus. The protein is Methionyl-tRNA formyltransferase of Shigella sonnei (strain Ss046).